Consider the following 82-residue polypeptide: Myrmicitoxin(1)-Pm3a (82 aa).

The signal sequence occupies residues 1-23; it reads MEIPKLLYIAVIAIGLSGSLTCA. A propeptide spanning residues 24-59 is cleaved from the precursor; the sequence is TPLANPLADPEAEAEAKATAEATAEAIAEALAEPEP. At leucine 81 the chain carries Leucine amide.

The protein belongs to the formicidae venom clade 1 family. As to expression, expressed by the venom gland.

Its subcellular location is the secreted. Toxin that causes a slowly developing temporary paralysis when intrathoracically injected into insects (blowflies). Does not cause spontaneous nocifensive behaviors by intraplantar injection in mice. This Pogonomyrmex maricopa (Maricopa harvester ant) protein is Myrmicitoxin(1)-Pm3a.